We begin with the raw amino-acid sequence, 366 residues long: Flagellar P-ring protein (366 aa).

Residues 1 to 20 (MVIKFLSALILLLVTTAAQA) form the signal peptide.

The protein belongs to the FlgI family. In terms of assembly, the basal body constitutes a major portion of the flagellar organelle and consists of four rings (L,P,S, and M) mounted on a central rod.

The protein localises to the periplasm. The protein resides in the bacterial flagellum basal body. Assembles around the rod to form the L-ring and probably protects the motor/basal body from shearing forces during rotation. The chain is Flagellar P-ring protein from Escherichia coli (strain SE11).